Consider the following 221-residue polypeptide: MAEKQKAVAKQEKVAISKRDPWALKKWFSVYAPSYLGGVFLAEVPANEAQKLLMRTLEVSLYDITKDISHLPIKLKFQIHRVEGLKALTRFKGLELTRDYIRSLVRKGTSKVTAITEVKTKDGMVMRIAVLGITTHRIGTAQKSAMRKKMIETLVKKAAELDSGQFLKEILEGTLAADLFIVAKKIAPMRKVEIAKIKVLKYPPEEEQIVVKEAVAEVTSA.

It belongs to the eukaryotic ribosomal protein eS1 family.

This chain is Small ribosomal subunit protein eS1, found in Pyrobaculum aerophilum (strain ATCC 51768 / DSM 7523 / JCM 9630 / CIP 104966 / NBRC 100827 / IM2).